A 441-amino-acid polypeptide reads, in one-letter code: Amino-acid acetyltransferase (441 aa).

In terms of domain architecture, N-acetyltransferase spans 295–434 (EQVRRATIND…QELYNYQRRS (140 aa)).

The protein belongs to the acetyltransferase family. ArgA subfamily. As to quaternary structure, homohexamer.

Its subcellular location is the cytoplasm. The catalysed reaction is L-glutamate + acetyl-CoA = N-acetyl-L-glutamate + CoA + H(+). It functions in the pathway amino-acid biosynthesis; L-arginine biosynthesis; N(2)-acetyl-L-ornithine from L-glutamate: step 1/4. The sequence is that of Amino-acid acetyltransferase from Yersinia pseudotuberculosis serotype O:1b (strain IP 31758).